The following is a 101-amino-acid chain: Integration host factor subunit alpha (101 aa).

Belongs to the bacterial histone-like protein family. In terms of assembly, heterodimer of an alpha and a beta chain.

Functionally, this protein is one of the two subunits of integration host factor, a specific DNA-binding protein that functions in genetic recombination as well as in transcriptional and translational control. This Saccharophagus degradans (strain 2-40 / ATCC 43961 / DSM 17024) protein is Integration host factor subunit alpha.